Here is a 346-residue protein sequence, read N- to C-terminus: DNA-directed RNA polymerases I and III subunit RPAC1 (346 aa).

Residue Ala-2 is modified to N-acetylalanine. Ser-4 carries the post-translational modification Phosphoserine.

This sequence belongs to the archaeal Rpo3/eukaryotic RPB3 RNA polymerase subunit family. Component of the RNA polymerase I and RNA polymerase III complexes consisting of at least 13 and 17 subunits, respectively. Pol I complex consists of a ten-subunit catalytic core composed of POLR1A/RPA1, POLR1B/RPA2, POLR1C/RPAC1, POLR1D/RPAC2, POLR1H/RPA12, POLR2E/RPABC1, POLR2F/RPABC2, POLR2H/RPABC3, POLR2K/RPABC4 and POLR2L/RPABC5; a mobile stalk subunit POLR1F/RPA43 protruding from the core and additional subunits homologous to general transcription factors POLR1E/RPA49 and POLR1G/RPA34. Part of Pol I pre-initiation complex (PIC), in which Pol I core assembles with RRN3 and promoter-bound UTBF and SL1/TIF-IB complex. Pol III complex consists of a ten-subunit catalytic core composed of POLR3A/RPC1, POLR3B/RPC2, POLR1C/RPAC1, POLR1D/RPAC2, POLR3K/RPC10, POLR2E/RPABC1, POLR2F/RPABC2, POLR2H/RPABC3, POLR2K/RPABC4 and POLR2L/RPABC5; a mobile stalk composed of two subunits POLR3H/RPC8 and CRCP/RPC9, protruding from the core and functioning primarily in transcription initiation; and additional subunits homologous to general transcription factors of the RNA polymerase II machinery, POLR3C/RPC3-POLR3F/RPC6-POLR3G/RPC7 heterotrimer required for transcription initiation and POLR3D/RPC4-POLR3E/RPC5 heterodimer involved in both transcription initiation and termination.

The protein resides in the nucleus. The protein localises to the nucleolus. It is found in the cytoplasm. It localises to the cytosol. Functionally, DNA-dependent RNA polymerase catalyzes the transcription of DNA into RNA using the four ribonucleoside triphosphates as substrates. Common component of RNA polymerases I and III which synthesize ribosomal RNA precursors and short non-coding RNAs including 5S rRNA, snRNAs, tRNAs and miRNAs, respectively. POLR1C/RPAC1 is part of the polymerase core and may function as a clamp element that moves to open and close the cleft. This Homo sapiens (Human) protein is DNA-directed RNA polymerases I and III subunit RPAC1.